Consider the following 431-residue polypeptide: Acrosin (431 aa).

Positions 1-16 are cleaved as a signal peptide; that stretch reads MLPTAVLLVLVVSVVA. N-linked (GlcNAc...) asparagine glycosylation occurs at asparagine 19. 6 cysteine pairs are disulfide-bonded: cysteine 22-cysteine 152, cysteine 26-cysteine 160, cysteine 71-cysteine 87, cysteine 175-cysteine 244, cysteine 207-cysteine 223, and cysteine 234-cysteine 264. The region spanning 40-288 is the Peptidase S1 domain; it reads VVGGQAAQQG…FLDWIASRIG (249 aa). Catalysis depends on charge relay system residues histidine 86 and aspartate 140. An N-linked (GlcNAc...) asparagine glycan is attached at asparagine 208. The active-site Charge relay system is serine 238. Positions 295-385 are disordered; sequence IQPATPTPPT…PPPASTKPPQ (91 aa). Over residues 331–341 the composition is skewed to basic residues; it reads PHPHPHPHPHP. A compositionally biased stretch (pro residues) spans 342 to 381; it reads RPPQPPAAQAPPPPPPPPPPPPPPPPPPPPPPPPPPPAST. The propeptide at 351–431 is pro-rich; it reads APPPPPPPPP…TEIPEVTLAS (81 aa).

This sequence belongs to the peptidase S1 family. In terms of assembly, heavy chain (catalytic) and a light chain linked by two disulfide bonds. Forms a heterodimer with SERPINA5.

It catalyses the reaction Preferential cleavage: Arg-|-Xaa, Lys-|-Xaa.. With respect to regulation, inhibited by SERPINA5. In terms of biological role, acrosin is the major protease of mammalian spermatozoa. It is a serine protease of trypsin-like cleavage specificity, it is synthesized in a zymogen form, proacrosin and stored in the acrosome. In Oryctolagus cuniculus (Rabbit), this protein is Acrosin (ACR).